The following is a 374-amino-acid chain: Chaperone protein DnaJ (374 aa).

The J domain occupies 4 to 68 (DYYEILGVSR…EMKARFDRFG (65 aa)). The CR-type zinc finger occupies 132-214 (GGDKELTIKH…CGGRGQKEAT (83 aa)). Cys145, Cys148, Cys162, Cys165, Cys188, Cys191, Cys202, and Cys205 together coordinate Zn(2+). CXXCXGXG motif repeat units follow at residues 145–152 (CGTCNGSG), 162–169 (CSTCGGTG), 188–195 (CPSCNGSG), and 202–209 (CVDCGGRG).

This sequence belongs to the DnaJ family. In terms of assembly, homodimer. Zn(2+) serves as cofactor.

It localises to the cytoplasm. Functionally, participates actively in the response to hyperosmotic and heat shock by preventing the aggregation of stress-denatured proteins and by disaggregating proteins, also in an autonomous, DnaK-independent fashion. Unfolded proteins bind initially to DnaJ; upon interaction with the DnaJ-bound protein, DnaK hydrolyzes its bound ATP, resulting in the formation of a stable complex. GrpE releases ADP from DnaK; ATP binding to DnaK triggers the release of the substrate protein, thus completing the reaction cycle. Several rounds of ATP-dependent interactions between DnaJ, DnaK and GrpE are required for fully efficient folding. Also involved, together with DnaK and GrpE, in the DNA replication of plasmids through activation of initiation proteins. This is Chaperone protein DnaJ from Trichodesmium erythraeum (strain IMS101).